The following is a 169-amino-acid chain: Large ribosomal subunit protein uL5 (169 aa).

The protein belongs to the universal ribosomal protein uL5 family. Part of the 50S ribosomal subunit; contacts the 5S rRNA and probably tRNA. Forms a bridge to the 30S subunit in the 70S ribosome.

In terms of biological role, this is one of the proteins that bind and probably mediate the attachment of the 5S RNA into the large ribosomal subunit, where it forms part of the central protuberance. In the 70S ribosome it contacts protein S13 of the 30S subunit (bridge B1b), connecting the 2 subunits; this bridge is implicated in subunit movement. May contact the P site tRNA; the 5S rRNA and some of its associated proteins might help stabilize positioning of ribosome-bound tRNAs. This Nanoarchaeum equitans (strain Kin4-M) protein is Large ribosomal subunit protein uL5.